We begin with the raw amino-acid sequence, 342 residues long: uncharacterized protein (342 aa).

The next 10 membrane-spanning stretches (helical) occupy residues 8–28 (FESSWFAAVMGTGVLAVTSLF), 39–59 (ISFLLFYFNILLFFVFLMLWI), 79–99 (SSFSPTVAVAMLVLGIDFILI), 108–128 (IFWVFGAIGMFLFSLIVPFYM), 142–162 (GWYIPPVGLIVIPIAGSLIMP), 175–195 (INYFGWGAGFFLYLALLAVVI), 207–227 (AMAPTVWINLGPIGAGIVALI), 242–262 (FYIFSFIFWGFGLWWSLMAII), 276–296 (AMSWWAFIFPLGVYIASTHLV), and 304–324 (IVDYIGFGLYWLLFFFWIVTL).

It belongs to the tellurite-resistance/dicarboxylate transporter (TDT) family.

The protein localises to the cell membrane. This is an uncharacterized protein from Methanocaldococcus jannaschii (strain ATCC 43067 / DSM 2661 / JAL-1 / JCM 10045 / NBRC 100440) (Methanococcus jannaschii).